The following is a 347-amino-acid chain: MALLFSLILAICTRPGFLASPSGVRLVGGLHRCEGRVEVEQKGQWGTVCDDGWDIKDVAVLCRELGCGAASGTPSGILYEPPAEKEQKVLIQSVSCTGTEDTLAQCEQEEVYDCSHDEDAGASCENPESSFSPVPEGVRLADGPGHCKGRVEVKHQNQWYTVCQTGWSLRAAKVVCRQLGCGRAVLTQKRCNKHAYGRKPIWLSQMSCSGREATLQDCPSGPWGKNTCNHDEDTWVECEDPFDLRLVGGDNLCSGRLEVLHKGVWGSVCDDNWGEKEDQVVCKQLGCGKSLSPSFRDRKCYGPGVGRIWLDNVRCSGEEQSLEQCQHRFWGFHDCTHQEDVAVICSG.

The signal sequence occupies residues 1 to 19; that stretch reads MALLFSLILAICTRPGFLA. SRCR domains are found at residues 24–125, 138–239, and 244–346; these read VRLV…ASCE, VRLA…VECE, and LRLV…VICS. Cystine bridges form between cysteine 33–cysteine 67, cysteine 49–cysteine 114, cysteine 62–cysteine 124, cysteine 96–cysteine 106, cysteine 163–cysteine 228, cysteine 176–cysteine 238, cysteine 208–cysteine 218, cysteine 253–cysteine 287, cysteine 269–cysteine 335, cysteine 282–cysteine 345, and cysteine 315–cysteine 325.

As to quaternary structure, interacts with FASN; the interaction is direct. Interacts (via SRCR2 and SRCR3) with pentameric IgM (via Fc region); disulfide-linked. In terms of processing, not N-glycosylated. Probably not O-glycosylated. Expressed in spleen, lymph node, thymus, bone marrow, and fetal liver, but not in non-lymphoid tissues.

The protein localises to the secreted. It localises to the cytoplasm. Its function is as follows. Secreted protein that acts as a key regulator of lipid synthesis: mainly expressed by macrophages in lymphoid and inflamed tissues and regulates mechanisms in inflammatory responses, such as infection or atherosclerosis. Able to inhibit lipid droplet size in adipocytes. Following incorporation into mature adipocytes via CD36-mediated endocytosis, associates with cytosolic FASN, inhibiting fatty acid synthase activity and leading to lipolysis, the degradation of triacylglycerols into glycerol and free fatty acids (FFA). CD5L-induced lipolysis occurs with progression of obesity: participates in obesity-associated inflammation following recruitment of inflammatory macrophages into adipose tissues, a cause of insulin resistance and obesity-related metabolic disease. Regulation of intracellular lipids mediated by CD5L has a direct effect on transcription regulation mediated by nuclear receptors ROR-gamma (RORC). Acts as a key regulator of metabolic switch in T-helper Th17 cells. Regulates the expression of pro-inflammatory genes in Th17 cells by altering the lipid content and limiting synthesis of cholesterol ligand of RORC, the master transcription factor of Th17-cell differentiation. CD5L is mainly present in non-pathogenic Th17 cells, where it decreases the content of polyunsaturated fatty acyls (PUFA), affecting two metabolic proteins MSMO1 and CYP51A1, which synthesize ligands of RORC, limiting RORC activity and expression of pro-inflammatory genes. Participates in obesity-associated autoimmunity via its association with IgM, interfering with the binding of IgM to Fcalpha/mu receptor and enhancing the development of long-lived plasma cells that produce high-affinity IgG autoantibodies. Also acts as an inhibitor of apoptosis in macrophages: promotes macrophage survival from the apoptotic effects of oxidized lipids in case of atherosclerosis. Involved in early response to microbial infection against various pathogens by acting as a pattern recognition receptor and by promoting autophagy. The protein is CD5 antigen-like (CD5L) of Homo sapiens (Human).